The chain runs to 99 residues: PE-PGRS family protein PE25 (99 aa).

A PE domain is found at 1–92; the sequence is MSFVITNPEA…GADKYATAEA (92 aa). The residue at position 2 (serine 2) is an N-acetylserine.

Belongs to the mycobacterial PE family. As to quaternary structure, forms a heterodimer with PPE41. The dimer forms a 1:1:1 heterotrimeric complex with EspG5. Interacts with PPE51.

The protein resides in the secreted. The PE25/PPE41 dimer induces both a strong humoral and cellular immune response. PE25 protein alone induces low response. The dimer induces necrosis, but not apoptosis, in mouse macrophage cells. It also induces activation and maturation of mouse dendritic cells and drives Th2-biased immune responses. The protein is PE-PGRS family protein PE25 of Mycobacterium tuberculosis (strain ATCC 25618 / H37Rv).